The primary structure comprises 871 residues: Probable inorganic carbon transporter subunit DabA (871 aa).

4 residues coordinate Zn(2+): C396, D398, H577, and C592.

It belongs to the inorganic carbon transporter (TC 9.A.2) DabA family. In terms of assembly, forms a complex with DabB. Requires Zn(2+) as cofactor.

The protein localises to the cell membrane. In terms of biological role, part of an energy-coupled inorganic carbon pump. The polypeptide is Probable inorganic carbon transporter subunit DabA (Bacillus subtilis (strain 168)).